Consider the following 1469-residue polypeptide: Actin cytoskeleton-regulatory complex protein pan1 (1469 aa).

A disordered region spans residues 1–163 (MYSSSNSFLG…PPPKSSGSKI (163 aa)). Over residues 17-52 (PGQQPPFMQQQQQPSYSQFPPGQQQQPQPTGFAPQP) the composition is skewed to low complexity. Residues 54-83 (GYAQPQLSSFGSQLQPQPTGFPSGQLQPQF) show a composition bias toward polar residues. Over residues 85-124 (GFPGAAPQQSQQPQPTGFQPQQPQFTGYPPQSQPPQLQVP) the composition is skewed to low complexity. The EH 1 domain occupies 175–263 (DQAKFEQLFK…ETIKNEVSSM (89 aa)). Residues 207–242 (LSGSDLSKIWVLSDSTKSGQLFFPEFALAMYLCNLR) form the EF-hand 1 domain. Disordered stretches follow at residues 276 to 311 (PEPV…QPTN) and 323 to 409 (TGFL…LVAQ). Positions 298 to 307 (PPAPQQPQPQ) are enriched in pro residues. The span at 323–346 (TGFLSQPTGLSPNQAPFGQQSNLA) shows a compositional bias: polar residues. Residues 347–366 (PQPTGLPGQPQQQSLQPQPT) are compositionally biased toward low complexity. The span at 391–401 (YASNLSPSQTG) shows a compositional bias: polar residues. One can recognise an EH 2 domain in the interval 466 to 555 (EKKIYDDLFR…PELIPPSTRN (90 aa)). The region spanning 499-534 (LNRQDLERIWTLADPNNRGRLNMDEFAVAMHLIYRK) is the EF-hand 2 domain. Disordered stretches follow at residues 619–650 (AAAG…SEDE), 801–845 (AAEL…RDVE), and 898–1469 (TAHI…RVLD). Residues 634 to 646 (NGRTPSPAASSQA) are compositionally biased toward polar residues. The stretch at 641 to 767 (AASSQASEDE…LFRLKDAKAH (127 aa)) forms a coiled coil. The segment covering 818-845 (AAARRLESESANVKADREKNDAMTRDVE) has biased composition (basic and acidic residues). Composition is skewed to low complexity over residues 908 to 917 (RASPSQSQQS) and 933 to 942 (TGSTGSLPGT). 5 stretches are compositionally biased toward basic and acidic residues: residues 943 to 961 (THED…RIAE), 981 to 1016 (RQER…EERG), 1039 to 1106 (ARTD…RLRA), 1117 to 1137 (KKQE…EQEA), and 1144 to 1161 (AELE…RELE). A coiled-coil region spans residues 973 to 1172 (EASETLVQRQ…MEEESSSDDE (200 aa)). Positions 1162–1174 (AMEEESSSDDEGP) are enriched in acidic residues. Pro residues predominate over residues 1193–1209 (EAPPPPPPAPATAPPVP). The segment covering 1210-1227 (AIAEPEAPTSPATSPASS) has biased composition (low complexity). The segment covering 1264 to 1284 (SDTHSTNPFHRLAQQQESTAP) has biased composition (polar residues). The segment covering 1368-1378 (PEADAAPSAPV) has biased composition (low complexity). 2 stretches are compositionally biased toward pro residues: residues 1379 to 1391 (AAPP…PVPA) and 1400 to 1430 (APPP…PPAA). The WH2 domain maps to 1436–1453 (DRGALLASIQAGKGLRKV). Over residues 1456-1469 (NDRSTSSTAGRVLD) the composition is skewed to polar residues.

It belongs to the PAN1 family. In terms of assembly, component of the PAN1 actin cytoskeleton-regulatory complex.

The protein resides in the cell membrane. It localises to the endosome membrane. The protein localises to the cytoplasm. Its subcellular location is the cytoskeleton. It is found in the actin patch. In terms of biological role, component of the PAN1 actin cytoskeleton-regulatory complex required for the internalization of endosomes during actin-coupled endocytosis. The complex links the site of endocytosis to the cell membrane-associated actin cytoskeleton. Mediates uptake of external molecules and vacuolar degradation of plasma membrane proteins. Plays a role in the proper organization of the cell membrane-associated actin cytoskeleton and promotes its destabilization. The sequence is that of Actin cytoskeleton-regulatory complex protein pan1 (pan1) from Aspergillus terreus (strain NIH 2624 / FGSC A1156).